A 504-amino-acid chain; its full sequence is ATP synthase subunit alpha, chloroplastic (504 aa).

Position 170 to 177 (glycine 170 to threonine 177) interacts with ATP.

This sequence belongs to the ATPase alpha/beta chains family. F-type ATPases have 2 components, CF(1) - the catalytic core - and CF(0) - the membrane proton channel. CF(1) has five subunits: alpha(3), beta(3), gamma(1), delta(1), epsilon(1). CF(0) has four main subunits: a, b, b' and c.

It localises to the plastid. The protein localises to the chloroplast thylakoid membrane. It carries out the reaction ATP + H2O + 4 H(+)(in) = ADP + phosphate + 5 H(+)(out). Its function is as follows. Produces ATP from ADP in the presence of a proton gradient across the membrane. The alpha chain is a regulatory subunit. The chain is ATP synthase subunit alpha, chloroplastic from Pyropia yezoensis (Susabi-nori).